A 72-amino-acid chain; its full sequence is Large ribosomal subunit protein bL28 (72 aa).

It belongs to the bacterial ribosomal protein bL28 family.

The sequence is that of Large ribosomal subunit protein bL28 from Chlorobaculum parvum (strain DSM 263 / NCIMB 8327) (Chlorobium vibrioforme subsp. thiosulfatophilum).